Reading from the N-terminus, the 380-residue chain is Putative ankyrin repeat protein RF_1306 (380 aa).

ANK repeat units lie at residues 48–76 (NKWS…NINA), 80–109 (KCRT…KIAP), 112–143 (YGWS…KYDK), 170–199 (NNKT…KFDI), 203–233 (LGYK…GKNT), 239–268 (LEKV…GFDK), 270–299 (LGQK…DAQY), 303–333 (LGRS…DINY), and 337–366 (SGLN…YESY).

The sequence is that of Putative ankyrin repeat protein RF_1306 from Rickettsia felis (strain ATCC VR-1525 / URRWXCal2) (Rickettsia azadi).